A 644-amino-acid polypeptide reads, in one-letter code: Exoribonuclease 2 (644 aa).

One can recognise an RNB domain in the interval 189 to 516; sequence RQDLTALNFV…NHRLLKAVIK (328 aa). Positions 561–643 constitute an S1 motif domain; it reads NTRFAAEIID…ETRSIIARPA (83 aa).

This sequence belongs to the RNR ribonuclease family. RNase II subfamily.

It localises to the cytoplasm. The enzyme catalyses Exonucleolytic cleavage in the 3'- to 5'-direction to yield nucleoside 5'-phosphates.. Involved in mRNA degradation. Hydrolyzes single-stranded polyribonucleotides processively in the 3' to 5' direction. The polypeptide is Exoribonuclease 2 (Salmonella paratyphi A (strain ATCC 9150 / SARB42)).